The chain runs to 852 residues: Alanine--tRNA ligase (852 aa).

Zn(2+) contacts are provided by His554, His558, Cys656, and His660.

It belongs to the class-II aminoacyl-tRNA synthetase family. The cofactor is Zn(2+).

It is found in the cytoplasm. It carries out the reaction tRNA(Ala) + L-alanine + ATP = L-alanyl-tRNA(Ala) + AMP + diphosphate. Functionally, catalyzes the attachment of alanine to tRNA(Ala) in a two-step reaction: alanine is first activated by ATP to form Ala-AMP and then transferred to the acceptor end of tRNA(Ala). Also edits incorrectly charged Ser-tRNA(Ala) and Gly-tRNA(Ala) via its editing domain. This Campylobacter concisus (strain 13826) protein is Alanine--tRNA ligase.